A 154-amino-acid chain; its full sequence is Putative glutamine amidotransferase-like protein RP712 (154 aa).

In terms of domain architecture, Glutamine amidotransferase type-1 spans 1-94 (MSIEKEKFWA…QQSVWSFHNK (94 aa)).

The polypeptide is Putative glutamine amidotransferase-like protein RP712 (Rickettsia prowazekii (strain Madrid E)).